A 290-amino-acid chain; its full sequence is UPF0046 protein K07C11.7 (290 aa).

Positions M1–A22 are cleaved as a signal peptide. The N-linked (GlcNAc...) asparagine glycan is linked to N204.

Belongs to the UPF0046 family.

This is UPF0046 protein K07C11.7 from Caenorhabditis elegans.